A 539-amino-acid polypeptide reads, in one-letter code: Cytochrome c oxidase subunit 1 homolog (539 aa).

2 helical membrane passes run 28 to 48 (LFAA…LLLL) and 75 to 95 (GVMA…VVAL). H117 is a binding site for heme b. The next 11 helical transmembrane spans lie at 118 to 138 (TSAV…FYVV), 154 to 174 (FVFW…LLGI), 187 to 207 (VDLW…GTIL), 214 to 234 (ISVA…LHIV), 265 to 285 (GHNA…YYFI), 298 to 318 (LSII…PHHL), 330 to 350 (LGMV…INGL), 368 to 388 (MMVM…MMSI), 402 to 422 (IGHV…GAIY), 443 to 463 (HFWL…VAGI), and 498 to 518 (LGGL…TMTI). Positions 266, 316, and 317 each coordinate Cu cation. 2 residues coordinate heme b: H404 and H406.

This sequence belongs to the heme-copper respiratory oxidase family. The cofactor is Cu(2+). Heme b serves as cofactor.

It localises to the cell membrane. It carries out the reaction 4 Fe(II)-[cytochrome c] + O2 + 8 H(+)(in) = 4 Fe(III)-[cytochrome c] + 2 H2O + 4 H(+)(out). It participates in energy metabolism; oxidative phosphorylation. In terms of biological role, cytochrome c oxidase is the component of the respiratory chain that catalyzes the reduction of oxygen to water. Subunits 1-3 form the functional core of the enzyme complex. Co I is the catalytic subunit of the enzyme. Electrons originating in cytochrome c or a quinol are transferred to the bimetallic center formed by a high-spin heme and copper B. This Agrobacterium tumefaciens (strain T37) protein is Cytochrome c oxidase subunit 1 homolog (fixN).